The following is a 520-amino-acid chain: MAHTLGLTQPNSTEPHKISFTAKEIDVIEWKGDILVVGVTEKDLAKDGNSKFENPILSKVDAHLSGLLAQVSSEEDFTGKPGQSTVLRLPGLGSKRIALIGLGQSVSSPVAFHSLGEAVATVSKASQSTSAAIVLASSVSDESKLSSVSALASGIVLGLFEDGRYKSESKKPSLKAVDIIGFGTGAEVEKKLKYAEDVSYGVIFGRELINSPANVLTPAVLAEEAAKVASTYSDVFTANILNEEQCKELKMGSYLAVAAASANPPHFIHLVYKPPNGSVKTKLALVGKGLTFDSGGYNIKTGPGCSIELMKFDMGGSAAVLGAAKAIGEIKPPGVEVHFIVAACENMISGTGMRPGDVITASNGKTIEVNNTDAEGRLTLADALVYACNQGVDKIVDLATLTGACVIALGTSMAGIYTPSDELAKEVIAASERSGEKLWRMPLEESYWEMMKSGVADMVNTGGRAGGSITAALFLKQFVSEKVQWMHIDMAGPVWNEKKKSGTGFGVATLVEWVQKNSSS.

Positions 288 and 293 each coordinate Mn(2+). Lys-300 is a catalytic residue. Mn(2+)-binding residues include Asp-313, Asp-373, and Glu-375. Residue Arg-377 is part of the active site.

Belongs to the peptidase M17 family. As to quaternary structure, homohexamer (dimer of homotrimers). Mn(2+) is required as a cofactor.

Its subcellular location is the cytoplasm. It catalyses the reaction Release of an N-terminal amino acid, Xaa-|-Yaa-, in which Xaa is preferably Leu, but may be other amino acids including Pro although not Arg or Lys, and Yaa may be Pro. Amino acid amides and methyl esters are also readily hydrolyzed, but rates on arylamides are exceedingly low.. It carries out the reaction Release of N-terminal proline from a peptide.. Its function is as follows. Presumably involved in the processing and regular turnover of intracellular proteins. Catalyzes the removal of unsubstituted N-terminal amino acids from various peptides. Possesses leucine aminopeptidase activity against the model substrate leucine-amido methyl coumarin. Possesses Cys-Gly dipeptidase activity. In addition, can cleave Cys-Leu and Leu-Cys dipeptides. Functionally, functions as a molecular chaperone to protect proteins from heat-induced damage. This Arabidopsis thaliana (Mouse-ear cress) protein is Leucine aminopeptidase 1.